A 435-amino-acid polypeptide reads, in one-letter code: Enolase (435 aa).

A (2R)-2-phosphoglycerate-binding site is contributed by glutamine 163. The active-site Proton donor is the glutamate 205. Aspartate 243, glutamate 292, and aspartate 319 together coordinate Mg(2+). (2R)-2-phosphoglycerate contacts are provided by lysine 344, arginine 373, serine 374, and lysine 395. Lysine 344 functions as the Proton acceptor in the catalytic mechanism.

Belongs to the enolase family. The cofactor is Mg(2+).

Its subcellular location is the cytoplasm. It is found in the secreted. The protein resides in the cell surface. It catalyses the reaction (2R)-2-phosphoglycerate = phosphoenolpyruvate + H2O. The protein operates within carbohydrate degradation; glycolysis; pyruvate from D-glyceraldehyde 3-phosphate: step 4/5. Functionally, catalyzes the reversible conversion of 2-phosphoglycerate (2-PG) into phosphoenolpyruvate (PEP). It is essential for the degradation of carbohydrates via glycolysis. The chain is Enolase from Streptococcus suis (strain 98HAH33).